Here is a 546-residue protein sequence, read N- to C-terminus: Chaperonin GroEL (546 aa).

ATP contacts are provided by residues threonine 30–proline 33, lysine 51, aspartate 87–threonine 91, glycine 415, asparagine 479–alanine 481, and aspartate 495.

It belongs to the chaperonin (HSP60) family. As to quaternary structure, forms a cylinder of 14 subunits composed of two heptameric rings stacked back-to-back. Interacts with the co-chaperonin GroES.

The protein resides in the cytoplasm. It catalyses the reaction ATP + H2O + a folded polypeptide = ADP + phosphate + an unfolded polypeptide.. Functionally, together with its co-chaperonin GroES, plays an essential role in assisting protein folding. The GroEL-GroES system forms a nano-cage that allows encapsulation of the non-native substrate proteins and provides a physical environment optimized to promote and accelerate protein folding. The chain is Chaperonin GroEL from Paraburkholderia phytofirmans (strain DSM 17436 / LMG 22146 / PsJN) (Burkholderia phytofirmans).